The chain runs to 364 residues: UDP-N-acetylglucosamine--N-acetylmuramyl-(pentapeptide) pyrophosphoryl-undecaprenol N-acetylglucosamine transferase (364 aa).

UDP-N-acetyl-alpha-D-glucosamine is bound by residues 10–12 (TGG), asparagine 124, arginine 166, serine 196, and glutamine 297.

The protein belongs to the glycosyltransferase 28 family. MurG subfamily.

It localises to the cell membrane. It catalyses the reaction di-trans,octa-cis-undecaprenyl diphospho-N-acetyl-alpha-D-muramoyl-L-alanyl-D-glutamyl-meso-2,6-diaminopimeloyl-D-alanyl-D-alanine + UDP-N-acetyl-alpha-D-glucosamine = di-trans,octa-cis-undecaprenyl diphospho-[N-acetyl-alpha-D-glucosaminyl-(1-&gt;4)]-N-acetyl-alpha-D-muramoyl-L-alanyl-D-glutamyl-meso-2,6-diaminopimeloyl-D-alanyl-D-alanine + UDP + H(+). Its pathway is cell wall biogenesis; peptidoglycan biosynthesis. In terms of biological role, cell wall formation. Catalyzes the transfer of a GlcNAc subunit on undecaprenyl-pyrophosphoryl-MurNAc-pentapeptide (lipid intermediate I) to form undecaprenyl-pyrophosphoryl-MurNAc-(pentapeptide)GlcNAc (lipid intermediate II). This is UDP-N-acetylglucosamine--N-acetylmuramyl-(pentapeptide) pyrophosphoryl-undecaprenol N-acetylglucosamine transferase from Caldanaerobacter subterraneus subsp. tengcongensis (strain DSM 15242 / JCM 11007 / NBRC 100824 / MB4) (Thermoanaerobacter tengcongensis).